Consider the following 455-residue polypeptide: Gamma-glutamyl phosphate reductase (455 aa).

Belongs to the gamma-glutamyl phosphate reductase family.

Its subcellular location is the cytoplasm. The catalysed reaction is L-glutamate 5-semialdehyde + phosphate + NADP(+) = L-glutamyl 5-phosphate + NADPH + H(+). It functions in the pathway amino-acid biosynthesis; L-proline biosynthesis; L-glutamate 5-semialdehyde from L-glutamate: step 2/2. In terms of biological role, catalyzes the NADPH-dependent reduction of L-glutamate 5-phosphate into L-glutamate 5-semialdehyde and phosphate. The product spontaneously undergoes cyclization to form 1-pyrroline-5-carboxylate. This chain is Gamma-glutamyl phosphate reductase, found in Synechococcus sp. (strain JA-2-3B'a(2-13)) (Cyanobacteria bacterium Yellowstone B-Prime).